The chain runs to 397 residues: Acetyl-CoA acetyltransferase (397 aa).

The active-site Acyl-thioester intermediate is Cys95. Residues Tyr187 and Lys230 each coordinate CoA. Tyr187 provides a ligand contact to K(+). 3 residues coordinate K(+): Ala246, Gly247, and Ala249. Position 250 (Ser250) interacts with CoA. Val347 lines the K(+) pocket. Catalysis depends on proton acceptor residues His351 and Cys379.

Belongs to the thiolase-like superfamily. Thiolase family.

It is found in the peroxisome. It catalyses the reaction 2 acetyl-CoA = acetoacetyl-CoA + CoA. Essential for n-decane utilization. This is Acetyl-CoA acetyltransferase (PAT1) from Yarrowia lipolytica (strain CLIB 122 / E 150) (Yeast).